Consider the following 417-residue polypeptide: Nucleosome assembly protein (417 aa).

The interval 1–47 is disordered; sequence MSDPIRTKPKSSMQIDNAPTPHNTPASVLNPSYLKNGNPVRAQAQEQ. Residues 10–35 show a composition bias toward polar residues; sequence KSSMQIDNAPTPHNTPASVLNPSYLK. A phosphothreonine mark is found at Thr20 and Thr24. At Ser27 the chain carries Phosphoserine. Lys50 is covalently cross-linked (Glycyl lysine isopeptide (Lys-Gly) (interchain with G-Cter in ubiquitin)). Position 53 is a phosphothreonine (Thr53). Residues Ser69, Ser76, Ser82, Ser98, Ser104, and Ser140 each carry the phosphoserine modification. Positions 143–362 are interaction with NBA1; sequence EQPKPEQIAK…IPRAVDWFTG (220 aa). Residues Ser159 and Ser177 each carry the phosphoserine; by CK2 modification. The segment at residues 330-356 is a DNA-binding region (H-T-H motif); it reads LEEDLEERLALDYSIGEQLKDKLIPRA. Positions 364-417 are disordered; sequence ALEFEFEEDEEEADEDEDEEEDDDHGLEDDDGESAEEQDDFAGRPEQAPECKQS. The segment covering 367–403 has biased composition (acidic residues); the sequence is FEFEEDEEEADEDEDEEEDDDHGLEDDDGESAEEQDD. Ser397 bears the Phosphoserine; by CK2 mark. Basic and acidic residues predominate over residues 404–417; sequence FAGRPEQAPECKQS.

Belongs to the nucleosome assembly protein (NAP) family. Component of the GIN4 complex composed of at least BNI5, CDC3, CDC10, CDC11, CDC12, GIN4, NAP1 and SHS1 which forms a ring at the bud neck. Homodimer (in-vitro). Interacts with the B-type cyclin CLB2. Interacts with 60S ribosomal protein L18 (RPL18A or RPL18B), CKA2, CKI1, eukaryotic elongation factor 1 complex eEF1A (TEF1 or TEF2), FOL1, HSC82, HTA2, HTB2, HTZ1, KAP114, KCC4, NIS1, SSA1, SSA2, SSB1, SSC1, SHM1, SIP5 and TCO89. Interacts with NBA1. Interacts with histone H3/H4 heterodimers. Post-translationally, phosphorylation by CK2 is required for normal progression through S phase. CK2 phosphorylation is not required for correct bud formation nor histone binding.

It localises to the cytoplasm. The protein localises to the nucleus. Its subcellular location is the bud neck. Acidic protein, which assembles histones into an octamer (in vitro). Involved in the regulation of the localization and the function of the septins during mitosis. Involved in the function of B-type cyclins. The polypeptide is Nucleosome assembly protein (Saccharomyces cerevisiae (strain ATCC 204508 / S288c) (Baker's yeast)).